The chain runs to 97 residues: Large ribosomal subunit protein bL28 (97 aa).

Belongs to the bacterial ribosomal protein bL28 family.

This is Large ribosomal subunit protein bL28 from Rickettsia bellii (strain OSU 85-389).